The chain runs to 457 residues: Argininosuccinate lyase (457 aa).

This sequence belongs to the lyase 1 family. Argininosuccinate lyase subfamily.

It localises to the cytoplasm. The enzyme catalyses 2-(N(omega)-L-arginino)succinate = fumarate + L-arginine. The protein operates within amino-acid biosynthesis; L-arginine biosynthesis; L-arginine from L-ornithine and carbamoyl phosphate: step 3/3. This chain is Argininosuccinate lyase, found in Escherichia coli O127:H6 (strain E2348/69 / EPEC).